Consider the following 435-residue polypeptide: Enolase (435 aa).

(2R)-2-phosphoglycerate is bound at residue glutamine 167. Glutamate 209 acts as the Proton donor in catalysis. The Mg(2+) site is built by aspartate 246, glutamate 292, and aspartate 319. The (2R)-2-phosphoglycerate site is built by lysine 344, arginine 373, serine 374, and lysine 395. The active-site Proton acceptor is lysine 344.

The protein belongs to the enolase family. It depends on Mg(2+) as a cofactor.

Its subcellular location is the cytoplasm. The protein localises to the secreted. The protein resides in the cell surface. It carries out the reaction (2R)-2-phosphoglycerate = phosphoenolpyruvate + H2O. It participates in carbohydrate degradation; glycolysis; pyruvate from D-glyceraldehyde 3-phosphate: step 4/5. Catalyzes the reversible conversion of 2-phosphoglycerate (2-PG) into phosphoenolpyruvate (PEP). It is essential for the degradation of carbohydrates via glycolysis. The protein is Enolase of Lachnospira eligens (strain ATCC 27750 / DSM 3376 / VPI C15-48 / C15-B4) (Eubacterium eligens).